Consider the following 437-residue polypeptide: MNALKGRDILALGFMTFALFVGAGNIIFPPIVGLQSGPHVWLAALGFLITAVGLPVITVIALAKVGGSVDALSHPIGRYAGGLLAAVCYLAVGPLFAIPRTATVSFEVGVVPLLGESGTALFVYSLAYFLLALAISLYPGRLLDTVGRFLAPLKILALAILGVAAFLWPAGPIGTAQPEYTQAAFSQGFVNGYLTMDTLAALVFGIVIVNAIRSRGVQSPRLITRYAIVAGLIAGVGLVLVYVSLFRLGAGSHAIAADASNGAAVLHAYVQHTFGSLGSSFLAGLIALACLVTAVGLTCACAEYFCQRLPLSYRSLVIILAGFSFIVSNLGLTKLIQVSIPVLTAIYPPCIVLVALSFCIGLWHSATRILAPVMLVSLAFGVLDALKAAGLGQDFPQWLLHLPLAEQGLAWLIPSVATLAACSLVDRLLGKPAQVAA.

12 consecutive transmembrane segments (helical) span residues 9–29 (ILAL…IIFP), 40–60 (VWLA…ITVI), 79–99 (YAGG…FAIP), 120–140 (ALFV…LYPG), 155–175 (ILAL…PIGT), 189–209 (FVNG…IVIV), 226–246 (YAIV…VSLF), 277–297 (LGSS…AVGL), 316–336 (LVII…TKLI), 342–362 (VLTA…CIGL), 369–389 (ILAP…LKAA), and 399–419 (LLHL…VATL).

Belongs to the branched chain amino acid transporter family.

The protein resides in the cell inner membrane. Functionally, component of the LIV-III transport system for branched-chain amino acids. BraZ is specific for isoleucine and valine. The LIV-III transport system may be H(+)-coupled. The protein is Branched-chain amino acid transport system 3 carrier protein (braZ) of Pseudomonas aeruginosa (strain ATCC 15692 / DSM 22644 / CIP 104116 / JCM 14847 / LMG 12228 / 1C / PRS 101 / PAO1).